The sequence spans 360 residues: Glyceraldehyde-3-phosphate dehydrogenase (360 aa).

NAD(+) contacts are provided by residues 13–14 (RI), aspartate 35, and arginine 82. Residues 153–155 (SCT), threonine 184, 213–214 (TG), and arginine 236 contribute to the D-glyceraldehyde 3-phosphate site. Cysteine 154 functions as the Nucleophile in the catalytic mechanism. Position 318 (asparagine 318) interacts with NAD(+).

Belongs to the glyceraldehyde-3-phosphate dehydrogenase family. In terms of assembly, homotetramer.

It catalyses the reaction D-glyceraldehyde 3-phosphate + phosphate + NAD(+) = (2R)-3-phospho-glyceroyl phosphate + NADH + H(+). Its pathway is carbohydrate degradation; glycolysis; pyruvate from D-glyceraldehyde 3-phosphate: step 1/5. Its function is as follows. Key enzyme in glycolysis that catalyzes the first step of the pathway by converting D-glyceraldehyde 3-phosphate (G3P) into 3-phospho-D-glyceroyl phosphate. Essential for the maintenance of cellular ATP levels and carbohydrate metabolism. The sequence is that of Glyceraldehyde-3-phosphate dehydrogenase from Atriplex nummularia (Old man saltbush).